A 47-amino-acid polypeptide reads, in one-letter code: Small, acid-soluble spore protein N (47 aa).

The disordered stretch occupies residues 1 to 47 (MPREHDKQSKFAPSHLGTKPVEYKRNKGKKMHDKSGETPIIMQTKGE).

Belongs to the SspN family.

It localises to the spore core. The chain is Small, acid-soluble spore protein N from Bacillus licheniformis (strain ATCC 14580 / DSM 13 / JCM 2505 / CCUG 7422 / NBRC 12200 / NCIMB 9375 / NCTC 10341 / NRRL NRS-1264 / Gibson 46).